The primary structure comprises 272 residues: Undecaprenyl-diphosphatase (272 aa).

8 helical membrane passes run 4 to 24 (FEVI…FLPI), 43 to 63 (GGRV…CWLY), 86 to 106 (ISVL…VDFI), 109 to 129 (VLFS…IIFW), 145 to 165 (ITFK…IPGT), 186 to 206 (TEFS…FDLI), 222 to 242 (VGFV…VLFV), and 249 to 269 (VFAW…MFFN).

Belongs to the UppP family.

The protein resides in the cell inner membrane. The enzyme catalyses di-trans,octa-cis-undecaprenyl diphosphate + H2O = di-trans,octa-cis-undecaprenyl phosphate + phosphate + H(+). Functionally, catalyzes the dephosphorylation of undecaprenyl diphosphate (UPP). Confers resistance to bacitracin. The polypeptide is Undecaprenyl-diphosphatase (Acinetobacter baumannii (strain AB307-0294)).